We begin with the raw amino-acid sequence, 1997 residues long: Chromatin-remodeling ATPase INO80 (1997 aa).

Disordered stretches follow at residues 1–378 (MDHF…AAPS), 397–579 (IAAP…AENE), and 674–858 (ERKK…EKVV). The segment covering 12–25 (PHFDEDGTEGRGDR) has biased composition (basic and acidic residues). The segment covering 32 to 41 (GPAPPPPPPR) has biased composition (pro residues). Positions 49–64 (NPVSSNSAVQSQAAAA) are enriched in low complexity. The segment covering 89 to 107 (STNSMRATPHSSSSFNLRS) has biased composition (polar residues). A compositionally biased stretch (basic and acidic residues) spans 108–117 (PTREPSEYRH). 3 stretches are compositionally biased toward low complexity: residues 118–156 (PLSS…SLSS), 203–230 (SLQA…PLSA), and 240–251 (SSSSQPPARASQ). The span at 264-276 (SFRDRDSSVREKS) shows a compositional bias: basic and acidic residues. The span at 288 to 297 (EASNGISGSS) shows a compositional bias: polar residues. Residues 298–317 (PRKDRDRDRDHRGTTRESQR) are compositionally biased toward basic and acidic residues. 2 stretches are compositionally biased toward polar residues: residues 318 to 340 (RSVS…SASN) and 366 to 378 (VDNT…AAPS). Low complexity predominate over residues 411–420 (SPRLSLRPPS). Polar residues-rich tracts occupy residues 433-442 (NPTNGTTSTA), 451-465 (SPPS…TNPS), and 472-481 (SFSNILSSSE). Composition is skewed to basic and acidic residues over residues 500-519 (VPMK…EKKE) and 529-540 (RISDIRHSESTP). Residues 666–735 (ERELFAEKER…VQQTRLILQK (70 aa)) adopt a coiled-coil conformation. A compositionally biased stretch (low complexity) spans 689-707 (MATTMEAKAAALARASAAQ). Basic and acidic residues predominate over residues 709–723 (EAERQKYMREAERAN). Residues 769–781 (TKGKGRAGARPKK) show a composition bias toward basic residues. The segment covering 782–793 (SKEQKQAEKDAA) has biased composition (basic and acidic residues). The span at 794–806 (EAAQAALDAGLEL) shows a compositional bias: low complexity. Basic and acidic residues predominate over residues 824-858 (APKEADVDKDKENKEPQEPKEPKEPKEKVIKEKVV). The 126-residue stretch at 881–1006 (IWRDLARKDV…SHFIGKKIKT (126 aa)) folds into the DBINO domain. Positions 1130–1302 (VNLYEQGING…WALLHFIMPS (173 aa)) constitute a Helicase ATP-binding domain. 1143–1150 (DEMGLGKT) is an ATP binding site. Residues 1253–1256 (DEAQ) carry the DEAQ box motif. The Helicase C-terminal domain maps to 1702-1858 (KLDELLRELK…GSSAAGGGVD (157 aa)). Positions 1891–1902 (ELLESGELDKMQ) are enriched in basic and acidic residues. The segment at 1891–1986 (ELLESGELDK…GSKKAKTTKQ (96 aa)) is disordered. Residues 1903–1914 (KKSRGGNKRKRG) are compositionally biased toward basic residues. A compositionally biased stretch (basic and acidic residues) spans 1919-1933 (EGKEVSLDEMYHEGE). Positions 1954–1967 (AAGGEGGDGKGAVG) are enriched in gly residues. Residues 1970–1985 (AKKRKTGGSKKAKTTK) are compositionally biased toward basic residues.

It belongs to the SNF2/RAD54 helicase family. In terms of assembly, component of the INO80 chromatin-remodeling complex.

The protein localises to the nucleus. It catalyses the reaction ATP + H2O = ADP + phosphate + H(+). Its function is as follows. ATPase component of the INO80 complex which remodels chromatin by shifting nucleosomes and is involved in DNA repair. The protein is Chromatin-remodeling ATPase INO80 (crf2-1) of Neurospora crassa (strain ATCC 24698 / 74-OR23-1A / CBS 708.71 / DSM 1257 / FGSC 987).